A 183-amino-acid polypeptide reads, in one-letter code: Apo-citrate lyase phosphoribosyl-dephospho-CoA transferase (183 aa).

Belongs to the CitX family.

The catalysed reaction is apo-[citrate lyase ACP] + 2'-(5''-triphospho-alpha-D-ribosyl)-3'-dephospho-CoA = holo-[citrate lyase ACP] + diphosphate. Functionally, transfers 2-(5''-triphosphoribosyl)-3'-dephosphocoenzyme-A on a serine residue to the apo-acyl carrier protein (gamma chain) of the citrate lyase to yield holo-acyl carrier protein. The sequence is that of Apo-citrate lyase phosphoribosyl-dephospho-CoA transferase from Escherichia coli O7:K1 (strain IAI39 / ExPEC).